The sequence spans 450 residues: Phosphoglucosamine mutase (450 aa).

Ser102 serves as the catalytic Phosphoserine intermediate. Mg(2+) is bound by residues Ser102, Asp243, Asp245, and Asp247. Phosphoserine is present on Ser102.

This sequence belongs to the phosphohexose mutase family. It depends on Mg(2+) as a cofactor. Post-translationally, activated by phosphorylation.

The catalysed reaction is alpha-D-glucosamine 1-phosphate = D-glucosamine 6-phosphate. In terms of biological role, catalyzes the conversion of glucosamine-6-phosphate to glucosamine-1-phosphate. This Mesorhizobium japonicum (strain LMG 29417 / CECT 9101 / MAFF 303099) (Mesorhizobium loti (strain MAFF 303099)) protein is Phosphoglucosamine mutase.